The sequence spans 315 residues: Porphobilinogen deaminase (315 aa).

C251 carries the post-translational modification S-(dipyrrolylmethanemethyl)cysteine.

This sequence belongs to the HMBS family. Monomer. Requires dipyrromethane as cofactor.

The catalysed reaction is 4 porphobilinogen + H2O = hydroxymethylbilane + 4 NH4(+). It functions in the pathway porphyrin-containing compound metabolism; protoporphyrin-IX biosynthesis; coproporphyrinogen-III from 5-aminolevulinate: step 2/4. Its function is as follows. Tetrapolymerization of the monopyrrole PBG into the hydroxymethylbilane pre-uroporphyrinogen in several discrete steps. The polypeptide is Porphobilinogen deaminase (Sphingopyxis alaskensis (strain DSM 13593 / LMG 18877 / RB2256) (Sphingomonas alaskensis)).